The primary structure comprises 191 residues: RRP15-like protein (191 aa).

Over residues 1 to 11 (MSTKNRDRLVV) the composition is skewed to basic and acidic residues. The segment at 1–52 (MSTKNRDRLVVTEDSDDDNEREEMSSGGESGEEGPSSVDGGAGDADETVAFP) is disordered. Positions 53 to 84 (AIERRKKKVIKKLTKKEQSLKKSVKEYRIKLA) form a coiled coil. The span at 119–153 (QKTMSDAVKEKMTARERREARQRFDGKNFDSDRFA) shows a compositional bias: basic and acidic residues. The disordered stretch occupies residues 119 to 191 (QKTMSDAVKE…IDTGNYSDED (73 aa)). Over residues 166–191 (GEDDDGEDQMDIGEEQIDTGNYSDED) the composition is skewed to acidic residues.

It belongs to the RRP15 family.

This Caenorhabditis elegans protein is RRP15-like protein.